A 188-amino-acid chain; its full sequence is Putative protein SSX6 (188 aa).

Disordered regions lie at residues 1–22 (MNGDDAFAKRPRDDAKASEKRS) and 74–188 (KRAT…EDDK). The 64-residue stretch at 20–83 (KRSKAFDDIA…KRATDSQRND (64 aa)) folds into the KRAB-related domain. Composition is skewed to basic and acidic residues over residues 75–96 (RATDSQRNDSDNDRNRGNEVER) and 112–122 (MPEKPAEEGSD). S123 carries the phosphoserine modification. Positions 147-156 (SSEKIHERSG) are enriched in basic and acidic residues. Residues 157 to 170 (PKRGKHAWTHRLRE) show a composition bias toward basic residues. A compositionally biased stretch (acidic residues) spans 179–188 (EISDPEEDDK).

It belongs to the SSX family. In terms of tissue distribution, not detected in any normal tissues. Expressed in a melanoma cell line.

Its function is as follows. Could act as a modulator of transcription. The chain is Putative protein SSX6 from Homo sapiens (Human).